The sequence spans 233 residues: Ras-related protein RabV (233 aa).

15–22 (GEKEVGKS) is a binding site for GTP. Residues 37 to 45 (YIPTIGIDF) carry the Effector region motif. GTP contacts are provided by residues 63–67 (DYVSH) and 122–125 (TKSD). Positions 143-182 (QNNNNNNNNNNNNNNNNNNNNNNNNNNNNNSNNNNNNNLQ) are disordered. A compositionally biased stretch (low complexity) spans 144–180 (NNNNNNNNNNNNNNNNNNNNNNNNNNNNNSNNNNNNN).

It belongs to the small GTPase superfamily. Rab family.

The polypeptide is Ras-related protein RabV (rabV) (Dictyostelium discoideum (Social amoeba)).